Consider the following 665-residue polypeptide: Cinnamate reductase (665 aa).

Gln109 provides a ligand contact to FMN. The Proton donor role is filled by Tyr182. FMN is bound by residues Arg230, Arg319, and 341–342; that span reads GR. Residues Cys365, Cys368, Cys372, and Cys384 each contribute to the [4Fe-4S] cluster site. FAD is bound by residues Ala415, Glu434, Asn442, Lys452, and Ala479.

This sequence in the N-terminal section; belongs to the NADH:flavin oxidoreductase/NADH oxidase family. The cofactor is FMN. Requires FAD as cofactor. It depends on [4Fe-4S] cluster as a cofactor.

It carries out the reaction 3-phenylpropanoate + NAD(+) = (E)-cinnamate + NADH + H(+). The protein operates within amino-acid degradation; L-phenylalanine degradation. In terms of biological role, involved in the fermentation of L-phenylalanine via a Stickland reaction. Catalyzes the reduction of (E)-cinnamate to yield 3-phenylpropionate. The protein is Cinnamate reductase of Clostridium sporogenes (strain ATCC 7955 / DSM 767 / NBRC 16411 / NCIMB 8053 / NCTC 8594 / PA 3679).